A 298-amino-acid chain; its full sequence is ATP synthase gamma chain (298 aa).

Belongs to the ATPase gamma chain family. As to quaternary structure, F-type ATPases have 2 components, CF(1) - the catalytic core - and CF(0) - the membrane proton channel. CF(1) has five subunits: alpha(3), beta(3), gamma(1), delta(1), epsilon(1). CF(0) has three main subunits: a, b and c.

The protein localises to the cell inner membrane. Its function is as follows. Produces ATP from ADP in the presence of a proton gradient across the membrane. The gamma chain is believed to be important in regulating ATPase activity and the flow of protons through the CF(0) complex. The polypeptide is ATP synthase gamma chain (Granulibacter bethesdensis (strain ATCC BAA-1260 / CGDNIH1)).